We begin with the raw amino-acid sequence, 320 residues long: MTANVCLDESVRPRLLDDFIGQDELRANMRVYLDAARERGQAMDHVLFYGNPGLGKTTLAQIMAGELGVNLVSTSGPVLERSGDLAAILTNLGRHDLLFVDEIHRMPIAVEEVLYPAMEDFKLDLVIGQGPGARTVKIDVEPFTLVGATTRIGLLSSPLRDRFGIISRLEYYTPADLARIVARTARIIGANLTEEGAIEIGRRARGTPRIANRLLRRVRDFATVHAGGVISADLASEALGRMEVDESGLDQMDRKLLEVLIEHYGGGPVGIKTLAVACAEEVRTIEDIYEPYLIQCGFLKRTPRGRVATAKAYRHLNLLG.

Residues 1–172 (MTANVCLDES…FGIISRLEYY (172 aa)) are large ATPase domain (RuvB-L). ATP contacts are provided by residues Arg-12, Gly-53, Lys-56, Thr-57, Thr-58, 119-121 (EDF), Arg-162, Tyr-172, and Arg-209. A Mg(2+)-binding site is contributed by Thr-57. The segment at 173–243 (TPADLARIVA…LASEALGRME (71 aa)) is small ATPAse domain (RuvB-S). The interval 246 to 320 (ESGLDQMDRK…KAYRHLNLLG (75 aa)) is head domain (RuvB-H). Residues Arg-301 and Arg-306 each contribute to the DNA site.

This sequence belongs to the RuvB family. In terms of assembly, homohexamer. Forms an RuvA(8)-RuvB(12)-Holliday junction (HJ) complex. HJ DNA is sandwiched between 2 RuvA tetramers; dsDNA enters through RuvA and exits via RuvB. An RuvB hexamer assembles on each DNA strand where it exits the tetramer. Each RuvB hexamer is contacted by two RuvA subunits (via domain III) on 2 adjacent RuvB subunits; this complex drives branch migration. In the full resolvosome a probable DNA-RuvA(4)-RuvB(12)-RuvC(2) complex forms which resolves the HJ.

It localises to the cytoplasm. The catalysed reaction is ATP + H2O = ADP + phosphate + H(+). Functionally, the RuvA-RuvB-RuvC complex processes Holliday junction (HJ) DNA during genetic recombination and DNA repair, while the RuvA-RuvB complex plays an important role in the rescue of blocked DNA replication forks via replication fork reversal (RFR). RuvA specifically binds to HJ cruciform DNA, conferring on it an open structure. The RuvB hexamer acts as an ATP-dependent pump, pulling dsDNA into and through the RuvAB complex. RuvB forms 2 homohexamers on either side of HJ DNA bound by 1 or 2 RuvA tetramers; 4 subunits per hexamer contact DNA at a time. Coordinated motions by a converter formed by DNA-disengaged RuvB subunits stimulates ATP hydrolysis and nucleotide exchange. Immobilization of the converter enables RuvB to convert the ATP-contained energy into a lever motion, pulling 2 nucleotides of DNA out of the RuvA tetramer per ATP hydrolyzed, thus driving DNA branch migration. The RuvB motors rotate together with the DNA substrate, which together with the progressing nucleotide cycle form the mechanistic basis for DNA recombination by continuous HJ branch migration. Branch migration allows RuvC to scan DNA until it finds its consensus sequence, where it cleaves and resolves cruciform DNA. This Nitratidesulfovibrio vulgaris (strain ATCC 29579 / DSM 644 / CCUG 34227 / NCIMB 8303 / VKM B-1760 / Hildenborough) (Desulfovibrio vulgaris) protein is Holliday junction branch migration complex subunit RuvB.